The primary structure comprises 567 residues: Allo-aromadendrene synthase TPS4FN (567 aa).

Arg282, Asp319, Asp323, Arg462, and Asp465 together coordinate (2E,6E)-farnesyl diphosphate. Mg(2+)-binding residues include Asp319 and Asp323. Residues 319-323 (DDIYD) carry the DDXXD motif motif. Mg(2+)-binding residues include Asp465 and Glu473.

This sequence belongs to the terpene synthase family. Tpsb subfamily. It depends on Mg(2+) as a cofactor. Mn(2+) serves as cofactor.

The enzyme catalyses (2E,6E)-farnesyl diphosphate = alpha-humulene + diphosphate. It catalyses the reaction (2E,6E)-farnesyl diphosphate = (+)-valencene + diphosphate. It carries out the reaction (2E)-geranyl diphosphate = beta-myrcene + diphosphate. The catalysed reaction is (2E,6E)-farnesyl diphosphate = allo-aromadendrene + diphosphate. The enzyme catalyses (2E,6E)-farnesyl diphosphate + H2O = palustrol + diphosphate. Its pathway is secondary metabolite biosynthesis; terpenoid biosynthesis. In terms of biological role, involved in sesquiterpene olefins biosynthesis, constituants of cannabinoids and terpenoids-rich resins. Catalyzes mainly the conversion of (2E)-farnesyl diphosphate to allo-aromadendrene, and also produces minor products such as alpha-humulene, valencene and palustrol. Can also use (2E)-geranyl diphosphate as substrate with low efficiency, producing minor amounts of myrcene. This is Allo-aromadendrene synthase TPS4FN from Cannabis sativa (Hemp).